Here is a 747-residue protein sequence, read N- to C-terminus: Ferrichrome outer membrane transporter/phage receptor (747 aa).

The N-terminal stretch at 1–33 is a signal peptide; the sequence is MARSKTAQPKHSLRKIAVVVATAVSGMSVYAQA. The Periplasmic portion of the chain corresponds to 34–192; that stretch reads AVEPKEDTIT…NMVSKRPTTE (159 aa). Positions 40–47 match the TonB box motif; it reads DTITVTAA. In terms of domain architecture, TBDR plug spans 75–187; the sequence is PIQKVPQSIS…PGGLLNMVSK (113 aa). Ferrichrome is bound by residues Arg114, Gln133, and 148–149; that span reads FY. A TBDR beta-barrel domain is found at 192–747; that stretch reads EPLKEVQFKA…QVVATATFRF (556 aa). The chain crosses the membrane as a beta stranded span at residues 193 to 201; that stretch reads PLKEVQFKA. The Extracellular segment spans residues 202-206; that stretch reads GTDSL. Residues 207–215 form a beta stranded membrane-spanning segment; it reads FQTGFDFSD. The Periplasmic portion of the chain corresponds to 216-222; that stretch reads SLDDDGV. A beta stranded membrane pass occupies residues 223–231; that stretch reads YSYRLTGLA. The Extracellular portion of the chain corresponds to 232-245; the sequence is RSANAQQKGSEEQR. The chain crosses the membrane as a beta stranded span at residues 246–255; it reads YAIAPAFTWR. Residues 256–259 are Periplasmic-facing; that stretch reads PDDK. Residues 260 to 268 traverse the membrane as a beta stranded segment; the sequence is TNFTFLSYF. The Extracellular segment spans residues 269-312; it reads QNEPETGYYGWLPKEGTVEPLPNGKRLPTDFNEGAKNNTYSRNE. 277–279 provides a ligand contact to ferrichrome; the sequence is YGW. A beta stranded membrane pass occupies residues 313-321; sequence KMVGYSFDH. The Periplasmic segment spans residues 322–326; the sequence is EFNDT. A beta stranded transmembrane segment spans residues 327 to 335; sequence FTVRQNLRF. Residues 336-387 lie on the Extracellular side of the membrane; sequence AENKTSQNSVYGYGVCSDPANAYSKQCAALAPADKGHYLARKYVVDDEKLQN. Residue 346–348 participates in ferrichrome binding; it reads YGY. Cys351 and Cys362 form a disulfide bridge. The chain crosses the membrane as a beta stranded span at residues 388 to 396; it reads FSVDTQLQS. Over 397–404 the chain is Periplasmic; it reads KFATGDID. The beta stranded transmembrane segment at 405–413 threads the bilayer; the sequence is HTLLTGVDF. Topologically, residues 414-464 are extracellular; it reads MRMRNDINAWFGYDDSVPLLNLYNPVNTDFDFNAKDPANSGPYRILNKQKQ. Phe424 provides a ligand contact to ferrichrome. Residues 465 to 473 traverse the membrane as a beta stranded segment; it reads TGVYVQDQA. Over 474-477 the chain is Periplasmic; the sequence is QWDK. Residues 478–486 traverse the membrane as a beta stranded segment; the sequence is VLVTLGGRY. Residues 487-508 lie on the Extracellular side of the membrane; sequence DWADQESLNRVAGTTDKRDDKQ. A beta stranded transmembrane segment spans residues 509-517; that stretch reads FTWRGGVNY. The Periplasmic segment spans residues 518 to 522; that stretch reads LFDNG. The chain crosses the membrane as a beta stranded span at residues 523–531; the sequence is VTPYFSYSE. The Extracellular segment spans residues 532 to 551; the sequence is SFEPSSQVGKDGNIFAPSKG. A beta stranded membrane pass occupies residues 552-560; the sequence is KQYEVGVKY. Residues 561–565 lie on the Periplasmic side of the membrane; that stretch reads VPEDR. Residues 566–574 traverse the membrane as a beta stranded segment; the sequence is PIVVTGAVY. Topologically, residues 575–601 are extracellular; that stretch reads NLTKTNNLMADPEGSFFSVEGGEIRAR. The beta stranded transmembrane segment at 602 to 610 threads the bilayer; that stretch reads GVEIEAKAA. The Periplasmic segment spans residues 611-613; the sequence is LSA. Residues 614-622 form a beta stranded membrane-spanning segment; the sequence is SVNVVGSYT. The Extracellular portion of the chain corresponds to 623-645; it reads YTDAEYTTDTTYKGNTPAQVPKH. A beta stranded transmembrane segment spans residues 646–654; the sequence is MASLWADYT. Topologically, residues 655-661 are periplasmic; it reads FFDGPLS. A beta stranded membrane pass occupies residues 662–670; sequence GLTLGTGGR. Residues 671–689 are Extracellular-facing; that stretch reads YTGSSYGDPANSFKVGSYT. Residues 690–698 traverse the membrane as a beta stranded segment; the sequence is VVDALVRYD. The Periplasmic portion of the chain corresponds to 699–705; the sequence is LARVGMA. A beta stranded transmembrane segment spans residues 706-714; it reads GSNVALHVN. The Extracellular portion of the chain corresponds to 715–737; the sequence is NLFDREYVASCFNTYGCFWGAER. The cysteines at positions 725 and 731 are disulfide-linked. The TonB C-terminal box signature appears at 730 to 747; sequence GCFWGAERQVVATATFRF. Ferrichrome is bound at residue Ala735. The beta stranded transmembrane segment at 738 to 746 threads the bilayer; that stretch reads QVVATATFR. A topological domain (periplasmic) is located at residue Phe747.

Belongs to the TonB-dependent receptor family. Monomer. Interacts with TonB. Interacts with Escherichia phage T5 receptor-binding protein pb5 (RBP-pb5); this interaction is necessary for the entry of the viral genome into the host cell.

It is found in the cell outer membrane. Its activity is regulated as follows. Binding of ferrichrome or colicin M enhances the interaction between FhuA and TonB. TonB activates FhuA through interaction with the beta-barrel. Its function is as follows. Involved in the uptake of iron in complex with ferrichrome, a hydroxamate-type siderophore. Binds and transports ferrichrome-iron across the outer membrane. In addition to its role in ferrichrome-iron transport, transports the antibiotic albomycin, which is a structural analog of ferrichrome, and acts as a receptor for colicin M, microcin J25 and bacteriophages T1, T5, phi80 and UC-1. The energy source, which is required for all FhuA functions except infection by phage T5, is provided by the inner membrane TonB system. The chain is Ferrichrome outer membrane transporter/phage receptor from Escherichia coli (strain K12).